The following is a 913-amino-acid chain: Pentatricopeptide repeat-containing protein At1g10270 (913 aa).

The tract at residues 34–138 (SLSPANEDPE…PNAPRLPDST (105 aa)) is disordered. Positions 64 to 73 (DPSQFQIPQN) are enriched in polar residues. The segment covering 74–84 (HTPPIPYPPIP) has biased composition (pro residues). A Nuclear localization signal motif is present at residues 99-108 (ERRRRKRRLR). The segment covering 108–130 (RIEPPLHALRRDPSAPPPKRDPN) has biased composition (basic and acidic residues). Residues 134–167 (LPDSTSALVGQRLNLHNRVQSLIRASDLDAASKL) form a leucine-zipper region. PPR repeat units lie at residues 179-214 (TVFT…NIVP), 215-250 (NVVS…PFAP), 251-285 (SSVT…GQAA), 286-316 (DSTV…LKSK), 321-355 (DGIV…KFRM), 356-390 (HPPT…HAPP), 396-426 (NSDT…VGSK), 435-469 (DYLG…SLPA), 470-504 (DAPS…NLRV), 505-539 (VADF…EPKP), and 540-574 (DPSI…NVGV). The interval 607–913 (RNAGQSGNTP…QEKKVVELRN (307 aa)) is disordered. The span at 639–649 (WTSQGVVHSNS) shows a compositional bias: polar residues. Composition is skewed to low complexity over residues 650–666 (GWAN…AYKA) and 673–690 (SWSN…SNQT). Residues 674–858 (WSNTSDNQQQ…TAQQQWSNQT (185 aa)) form a 14 X 11 AA approximate tandem repeats of W-x(2)-Q-x(4)-Q-x(2) region. The segment covering 691–700 (AGQQPPSWSR) has biased composition (polar residues). Residues 706-727 (QQQQSWSQQSGWSSPSGHQQSW) are compositionally biased toward low complexity. Positions 728–761 (TNQTAGQQQPWANQTPGQQQQWANQTPGQQQQLA) are enriched in polar residues. The segment covering 762 to 791 (NQTPGQQQQWANQTPGQQQQWANQNNGHQQ) has biased composition (low complexity). The segment covering 792–814 (PWANQNTGHQQSWANQTPSQQQP) has biased composition (polar residues). Residues 815–845 (WANQTTGQQQGWGNQTTGQQQQWANQTAGQQ) show a composition bias toward low complexity. Composition is skewed to polar residues over residues 846–867 (SGWT…SQWL) and 875–894 (ANQT…QQEP). Residues 899–913 (ECQETQEKKVVELRN) are compositionally biased toward basic and acidic residues.

It belongs to the PPR family. P subfamily. As to quaternary structure, interacts with RPB36B through its WQQ domain. Ubiquitous but preferentially expressed in gametophytes and young embryos.

The protein resides in the nucleus. In terms of biological role, may function as a transcriptional regulator essential for early embryogenesis. This Arabidopsis thaliana (Mouse-ear cress) protein is Pentatricopeptide repeat-containing protein At1g10270 (GRP23).